Reading from the N-terminus, the 240-residue chain is Glutathione S-transferase theta-1 (240 aa).

The GST N-terminal domain occupies 2-82; sequence GLELYLDLLS…YLTRKYKVPD (81 aa). Glutathione-binding positions include histidine 40, 53 to 54, and 66 to 67; these read KV and ES. Positions 88 to 220 constitute a GST C-terminal domain; it reads DLQARARVDE…HEVILKAKDF (133 aa).

This sequence belongs to the GST superfamily. Theta family. Homodimer. In terms of tissue distribution, found in erythrocyte. Expressed at low levels in liver. In lung, expressed at low levels in club cells and ciliated cells at the alveolar/bronchiolar junction. Absent from epithelial cells of larger bronchioles.

The protein localises to the cytoplasm. The enzyme catalyses RX + glutathione = an S-substituted glutathione + a halide anion + H(+). In terms of biological role, conjugation of reduced glutathione to a wide number of exogenous and endogenous hydrophobic electrophiles. Acts on 1,2-epoxy-3-(4-nitrophenoxy)propane, phenethylisothiocyanate 4-nitrobenzyl chloride and 4-nitrophenethyl bromide. Displays glutathione peroxidase activity with cumene hydroperoxide. This is Glutathione S-transferase theta-1 (GSTT1) from Homo sapiens (Human).